Consider the following 446-residue polypeptide: Tubulin beta chain (446 aa).

8 residues coordinate GTP: Gln-11, Glu-69, Ser-138, Gly-142, Thr-143, Gly-144, Asn-204, and Asn-226. Glu-69 contacts Mg(2+). Residues 427–446 (EAGVDEGEEFEEEEDFGDEQ) form a disordered region. A compositionally biased stretch (acidic residues) spans 429 to 446 (GVDEGEEFEEEEDFGDEQ).

Belongs to the tubulin family. Dimer of alpha and beta chains. A typical microtubule is a hollow water-filled tube with an outer diameter of 25 nm and an inner diameter of 15 nM. Alpha-beta heterodimers associate head-to-tail to form protofilaments running lengthwise along the microtubule wall with the beta-tubulin subunit facing the microtubule plus end conferring a structural polarity. Microtubules usually have 13 protofilaments but different protofilament numbers can be found in some organisms and specialized cells. Mg(2+) serves as cofactor.

Its subcellular location is the cytoplasm. It is found in the cytoskeleton. Its function is as follows. Tubulin is the major constituent of microtubules, a cylinder consisting of laterally associated linear protofilaments composed of alpha- and beta-tubulin heterodimers. Microtubules grow by the addition of GTP-tubulin dimers to the microtubule end, where a stabilizing cap forms. Below the cap, tubulin dimers are in GDP-bound state, owing to GTPase activity of alpha-tubulin. The protein is Tubulin beta chain of Giardia intestinalis (Giardia lamblia).